A 134-amino-acid chain; its full sequence is Large ribosomal subunit protein uL16 (134 aa).

Over residues Met1–Gly20 the composition is skewed to basic residues. The interval Met1–Thr21 is disordered.

It belongs to the universal ribosomal protein uL16 family. In terms of assembly, part of the 50S ribosomal subunit.

Its function is as follows. Binds 23S rRNA and is also seen to make contacts with the A and possibly P site tRNAs. The chain is Large ribosomal subunit protein uL16 from Blochmanniella pennsylvanica (strain BPEN).